A 437-amino-acid chain; its full sequence is AA9 family lytic polysaccharide monooxygenase H (437 aa).

Residues 1-21 form the signal peptide; the sequence is MNLSLFTLALVACYSSQLAAA. A Cu(2+)-binding site is contributed by His-22. Cys-64 and Cys-193 form a disulfide bridge. 2 N-linked (GlcNAc...) asparagine glycosylation sites follow: Asn-67 and Asn-79. His-104 serves as a coordination point for Cu(2+). N-linked (GlcNAc...) asparagine glycosylation is found at Asn-120 and Asn-138. Positions 178 and 188 each coordinate O2. Tyr-190 is a Cu(2+) binding site. N-linked (GlcNAc...) asparagine glycosylation is found at Asn-252 and Asn-307. The 46-residue stretch at 392–437 folds into the Chitin-binding type-1 domain; the sequence is DGKCGDGNGQTCKGSLLGECCSQVGYCGSSESYCGVGCQGNFGVCG. 4 disulfides stabilise this stretch: Cys-395-Cys-412, Cys-403-Cys-418, Cys-411-Cys-425, and Cys-429-Cys-436.

This sequence belongs to the polysaccharide monooxygenase AA9 family. It depends on Cu(2+) as a cofactor.

The protein resides in the secreted. The enzyme catalyses [(1-&gt;4)-beta-D-glucosyl]n+m + reduced acceptor + O2 = 4-dehydro-beta-D-glucosyl-[(1-&gt;4)-beta-D-glucosyl]n-1 + [(1-&gt;4)-beta-D-glucosyl]m + acceptor + H2O.. Its function is as follows. Lytic polysaccharide monooxygenase (LPMO) that depolymerizes crystalline and amorphous polysaccharides via the oxidation of scissile alpha- or beta-(1-4)-glycosidic bonds, yielding C1 and C4 oxidation products. Catalysis by LPMOs requires the reduction of the active-site copper from Cu(II) to Cu(I) by a reducing agent and H(2)O(2) or O(2) as a cosubstrate. This Botryotinia fuckeliana (strain B05.10) (Noble rot fungus) protein is AA9 family lytic polysaccharide monooxygenase H.